Consider the following 156-residue polypeptide: Flagellar assembly factor FliW (156 aa).

It belongs to the FliW family. In terms of assembly, interacts with translational regulator CsrA and flagellin(s).

The protein localises to the cytoplasm. Acts as an anti-CsrA protein, binds CsrA and prevents it from repressing translation of its target genes, one of which is flagellin. Binds to flagellin and participates in the assembly of the flagellum. This is Flagellar assembly factor FliW from Syntrophomonas wolfei subsp. wolfei (strain DSM 2245B / Goettingen).